A 277-amino-acid chain; its full sequence is Carbonyl reductase [NADPH] 1 (277 aa).

N-acetylserine is present on Ser-2. Phosphoserine occurs at positions 2 and 30. NADP(+) contacts are provided by residues 10–34, 63–64, and Asn-90; these read VTGANKGIGFAITRDLCRKFSGDVV and DI. Glutathione is bound by residues 95–97 and Gln-106; that span reads FKV. A substrate-binding site is contributed by Ser-140. 193–194 is a glutathione binding site; sequence AY. Tyr-194 acts as the Proton acceptor in catalysis. NADP(+) contacts are provided by residues 194–198 and 231–233; these read YGVTK and VRT. Lys-239 is subject to N6-1-carboxyethyl lysine. Residues 258–277 form a disordered region; it reads PPDAEGPHGQFVQDKKVEPW.

Belongs to the short-chain dehydrogenases/reductases (SDR) family. In terms of assembly, monomer.

The protein localises to the cytoplasm. It catalyses the reaction a secondary alcohol + NADP(+) = a ketone + NADPH + H(+). The enzyme catalyses prostaglandin F2alpha + NADP(+) = prostaglandin E2 + NADPH + H(+). The catalysed reaction is prostaglandin E1 + NADP(+) = 15-oxoprostaglandin E1 + NADPH + H(+). It carries out the reaction menadione + NADPH + H(+) = menadiol + NADP(+). It catalyses the reaction prostaglandin D2 + NADP(+) = 15-oxoprostaglandin D2 + NADPH + H(+). The enzyme catalyses prostaglandin E2 + NADP(+) = 15-oxoprostaglandin E2 + NADPH + H(+). The catalysed reaction is prostaglandin F2alpha + NADP(+) = 15-oxoprostaglandin F2alpha + NADPH + H(+). It carries out the reaction daunorubicin + NADPH + H(+) = 13-dihydrodaunorubicin + NADP(+). It catalyses the reaction S-nitrosoglutathione + NADPH + H(+) = S-(hydroxysulfenamide)glutathione + NADP(+). The enzyme catalyses corticosterone + NADPH + H(+) = 20beta-dihydrocorticosterone + NADP(+). The catalysed reaction is a primary alcohol + NADP(+) = an aldehyde + NADPH + H(+). It carries out the reaction cortisol + NADPH + H(+) = 20beta-dihydrocortisol + NADP(+). Functionally, NADPH-dependent reductase with broad substrate specificity. Catalyzes the reduction of a wide variety of carbonyl compounds including quinones, prostaglandins, menadione, plus various xenobiotics. Catalyzes the reduction of the antitumor anthracyclines doxorubicin and daunorubicin to the cardiotoxic compounds doxorubicinol and daunorubicinol. Can convert prostaglandin E to prostaglandin F2-alpha. Can bind glutathione, which explains its higher affinity for glutathione-conjugated substrates. Catalyzes the reduction of S-nitrosoglutathione. In addition, participates in the glucocorticoid metabolism by catalyzing the NADPH-dependent cortisol/corticosterone into 20beta-dihydrocortisol (20b-DHF) or 20beta-corticosterone (20b-DHB), which are weak agonists of NR3C1 and NR3C2 in adipose tissue. This Mus musculus (Mouse) protein is Carbonyl reductase [NADPH] 1.